The chain runs to 118 residues: Large ribosomal subunit protein uL18 (118 aa).

Residues 1–25 are disordered; it reads MITKPDKNKVRQKRHRRVRGKLSGT. The span at 10-20 shows a compositional bias: basic residues; the sequence is VRQKRHRRVRG.

The protein belongs to the universal ribosomal protein uL18 family. Part of the 50S ribosomal subunit; part of the 5S rRNA/L5/L18/L25 subcomplex. Contacts the 5S and 23S rRNAs.

In terms of biological role, this is one of the proteins that bind and probably mediate the attachment of the 5S RNA into the large ribosomal subunit, where it forms part of the central protuberance. The chain is Large ribosomal subunit protein uL18 from Streptococcus gordonii (strain Challis / ATCC 35105 / BCRC 15272 / CH1 / DL1 / V288).